Reading from the N-terminus, the 370-residue chain is Probable protein phosphatase 2C 67 (370 aa).

The PPM-type phosphatase domain occupies 35 to 344 (TFGEFSMAMI…DDITVIVVYL (310 aa)). Residues D77, G78, D276, and D335 each coordinate Mn(2+).

The protein belongs to the PP2C family. Interacts with SAUR19. Interacts with AHA2 at the plasma membrane. Requires Mg(2+) as cofactor. Mn(2+) serves as cofactor.

The protein localises to the cell membrane. It carries out the reaction O-phospho-L-seryl-[protein] + H2O = L-seryl-[protein] + phosphate. The enzyme catalyses O-phospho-L-threonyl-[protein] + H2O = L-threonyl-[protein] + phosphate. Dephosphorylates and represses plasma membrane H(+)-ATPases (PM H(+)-ATPases, e.g. AHA1 and AHA2), thus influencing negatively plant growth and fitness. Promotes the apical hook maintenance of etiolated seedlings. This chain is Probable protein phosphatase 2C 67, found in Arabidopsis thaliana (Mouse-ear cress).